An 882-amino-acid chain; its full sequence is Valine--tRNA ligase (882 aa).

The 'HIGH' region motif lies at 52–62 (PNVTGSLHMGH). The 'KMSKS' region signature appears at 539 to 543 (KMSKS). Lys-542 is an ATP binding site. Positions 816–882 (IDVAAERRRL…RINARLAVLQ (67 aa)) form a coiled coil.

This sequence belongs to the class-I aminoacyl-tRNA synthetase family. ValS type 1 subfamily. As to quaternary structure, monomer.

The protein localises to the cytoplasm. It catalyses the reaction tRNA(Val) + L-valine + ATP = L-valyl-tRNA(Val) + AMP + diphosphate. Functionally, catalyzes the attachment of valine to tRNA(Val). As ValRS can inadvertently accommodate and process structurally similar amino acids such as threonine, to avoid such errors, it has a 'posttransfer' editing activity that hydrolyzes mischarged Thr-tRNA(Val) in a tRNA-dependent manner. The protein is Valine--tRNA ligase of Mycolicibacterium paratuberculosis (strain ATCC BAA-968 / K-10) (Mycobacterium paratuberculosis).